The following is a 101-amino-acid chain: Small ribosomal subunit protein uS14 (101 aa).

It belongs to the universal ribosomal protein uS14 family. In terms of assembly, part of the 30S ribosomal subunit. Contacts proteins S3 and S10.

Functionally, binds 16S rRNA, required for the assembly of 30S particles and may also be responsible for determining the conformation of the 16S rRNA at the A site. The protein is Small ribosomal subunit protein uS14 of Pseudoalteromonas translucida (strain TAC 125).